A 211-amino-acid polypeptide reads, in one-letter code: Glycerol-3-phosphate acyltransferase (211 aa).

Helical transmembrane passes span 5–25 (ALGM…ILFC), 58–78 (VLVF…ALGV), 80–100 (PLYL…PVFF), 112–132 (LGAI…TWLL), and 138–158 (GYSS…VWWF).

Belongs to the PlsY family. In terms of assembly, probably interacts with PlsX.

It is found in the cell inner membrane. It catalyses the reaction an acyl phosphate + sn-glycerol 3-phosphate = a 1-acyl-sn-glycero-3-phosphate + phosphate. It participates in lipid metabolism; phospholipid metabolism. In terms of biological role, catalyzes the transfer of an acyl group from acyl-phosphate (acyl-PO(4)) to glycerol-3-phosphate (G3P) to form lysophosphatidic acid (LPA). This enzyme utilizes acyl-phosphate as fatty acyl donor, but not acyl-CoA or acyl-ACP. The polypeptide is Glycerol-3-phosphate acyltransferase (Pectobacterium atrosepticum (strain SCRI 1043 / ATCC BAA-672) (Erwinia carotovora subsp. atroseptica)).